The chain runs to 215 residues: Disulfide-bond oxidoreductase YfcG (215 aa).

The region spanning 1–87 is the GST N-terminal domain; the sequence is MIDLYFAPTP…YLAEKTGLFL (87 aa). Residues Asn11, Gln38, Arg40, Ile52, 71–72, and Arg132 contribute to the glutathione site; that span reads ES. Residues 90 to 215 enclose the GST C-terminal domain; the sequence is ETRERAATLQ…AQLGDERSDS (126 aa).

The protein belongs to the GST superfamily. Nu-class GSH transferase family. As to quaternary structure, homodimer.

Its function is as follows. Exhibits a very robust glutathione (GSH)-dependent disulfide-bond reductase activity toward the model substrate, 2-hydroxyethyl disulfide; the actual physiological substrates are not known. Also has a low GSH-dependent hydroperoxidase activity toward cumene hydroperoxide, but does not reduce H(2)O(2), tert-butyl hydroperoxide, benzyl peroxide, or lauroyl peroxide. Exhibits little or no GSH transferase activity with most typical electrophilic substrates, and has no detectable transferase activity using glutathionylspermidine (GspSH) as the nucleophilic substrate. Is involved in defense against oxidative stress, probably via its peroxidase activity. In Escherichia coli (strain K12), this protein is Disulfide-bond oxidoreductase YfcG (yfcG).